The primary structure comprises 387 residues: Monopolar spindle protein 2 (387 aa).

The stretch at 157 to 269 (NNIGKALEVQ…FLKDQIRRER (113 aa)) forms a coiled coil. Residues 216–235 (RQVEDNQNSSRTSDPGSPLV) form a disordered region. Residues 220–230 (DNQNSSRTSDP) show a composition bias toward polar residues. Residues 311-327 (IRIIVCFALLAGVLPYI) form a helical membrane-spanning segment.

Belongs to the MPS2 family. As to quaternary structure, interacts with BBP1, MPS3, and SPC24.

It localises to the nucleus membrane. Its subcellular location is the cytoplasm. It is found in the cytoskeleton. The protein localises to the microtubule organizing center. The protein resides in the spindle pole body. Functionally, component of the spindle pole body (SPB) required for insertion of the nascent SPB into the nuclear envelope and for the proper execution of spindle pole body (SPB) duplication. The polypeptide is Monopolar spindle protein 2 (MPS2) (Saccharomyces cerevisiae (strain RM11-1a) (Baker's yeast)).